A 295-amino-acid chain; its full sequence is Lectin 11 (295 aa).

Residues 1–22 are Cytoplasmic-facing; sequence MHYSHFYFIINNTNMTINAIPK. Residues 23 to 45 form a helical membrane-spanning segment; that stretch reads LFATKNSISLSIVIFMYLLILVA. The Extracellular segment spans residues 46–295; it reads NVKSDSSFNF…ILSWSFTSNM (250 aa). N152 carries an N-linked (GlcNAc...) asparagine glycan.

This sequence belongs to the leguminous lectin family.

Its subcellular location is the membrane. Its function is as follows. May be involved in arbuscular mycorrhizal (AM) symbiosis with AM fungi. In Medicago truncatula (Barrel medic), this protein is Lectin 11.